A 465-amino-acid chain; its full sequence is Iron-sulfur cluster assembly SufBD family protein SAUSA300_0822 (465 aa).

It belongs to the iron-sulfur cluster assembly SufBD family.

The protein is Iron-sulfur cluster assembly SufBD family protein SAUSA300_0822 of Staphylococcus aureus (strain USA300).